The chain runs to 475 residues: D(1B) dopamine receptor (475 aa).

Residues 1–38 are Extracellular-facing; it reads MLPPGRNRTAQPARLGLQRQLAQVDAPAGSATPLGPAQ. A glycan (N-linked (GlcNAc...) asparagine) is linked at Asn-7. A helical membrane pass occupies residues 39-64; sequence VVTAGLLTLLIVWTLLGNVLVCAAIV. The Cytoplasmic portion of the chain corresponds to 65-75; sequence RSRHLRAKMTN. Residues 76–102 form a helical membrane-spanning segment; the sequence is IFIVSLAVSDLFVALLVMPWKAVAEVA. Over 103–111 the chain is Extracellular; sequence GYWPFGTFC. The cysteines at positions 111 and 211 are disulfide-linked. Residues 112 to 134 form a helical membrane-spanning segment; sequence DIWVAFDIMCSTASILNLCIISV. Topologically, residues 135-153 are cytoplasmic; it reads DRYWAISRPFRYERKMTQR. A helical membrane pass occupies residues 154–179; the sequence is VALVMVGLAWTLSILISFIPVQLNWH. Over 180–215 the chain is Extracellular; the sequence is RDKAGSQGQEGLLSNGTPWEEGWELEGRTENCDSSL. The helical transmembrane segment at 216–240 threads the bilayer; that stretch reads NRTYAISSSLISFYIPVAIMIVTYT. At 241–289 the chain is on the cytoplasmic side; it reads RIYRIAQVQIRRISSLERAAEHAQSCRSRGAYEPDPSLRASIKKETKVF. The helical transmembrane segment at 290 to 317 threads the bilayer; it reads KTLSMIMGVFVCCWLPFFILNCMVPFCS. Topologically, residues 318–335 are extracellular; sequence SGDAEGPKTGFPCVSETT. A helical membrane pass occupies residues 336-357; sequence FDIFVWFGWANSSLNPIIYAFN. Residues 358-475 are Cytoplasmic-facing; the sequence is ADFRKVFAQL…LTPNCFDKTA (118 aa). Cys-370 carries S-palmitoyl cysteine lipidation. Residues 415–443 form a disordered region; it reads SGDREVGEEEEEGPFDHMSQISPTTPDGD.

The protein belongs to the G-protein coupled receptor 1 family. Brain, in the lateral mammillary nuclei, the anterior pretectal nuclei, and several layers of the hippocampus.

It localises to the cell membrane. Functionally, dopamine receptor whose activity is mediated by G proteins which activate adenylyl cyclase. The polypeptide is D(1B) dopamine receptor (Drd5) (Rattus norvegicus (Rat)).